Reading from the N-terminus, the 225-residue chain is NAD(P)H-quinone oxidoreductase subunit K, chloroplastic (225 aa).

C43, C44, C108, and C139 together coordinate [4Fe-4S] cluster.

The protein belongs to the complex I 20 kDa subunit family. NDH is composed of at least 16 different subunits, 5 of which are encoded in the nucleus. Requires [4Fe-4S] cluster as cofactor.

It is found in the plastid. Its subcellular location is the chloroplast thylakoid membrane. It catalyses the reaction a plastoquinone + NADH + (n+1) H(+)(in) = a plastoquinol + NAD(+) + n H(+)(out). The catalysed reaction is a plastoquinone + NADPH + (n+1) H(+)(in) = a plastoquinol + NADP(+) + n H(+)(out). Functionally, NDH shuttles electrons from NAD(P)H:plastoquinone, via FMN and iron-sulfur (Fe-S) centers, to quinones in the photosynthetic chain and possibly in a chloroplast respiratory chain. The immediate electron acceptor for the enzyme in this species is believed to be plastoquinone. Couples the redox reaction to proton translocation, and thus conserves the redox energy in a proton gradient. The chain is NAD(P)H-quinone oxidoreductase subunit K, chloroplastic from Amborella trichopoda.